We begin with the raw amino-acid sequence, 520 residues long: Peptidoglycan-recognition protein LC (520 aa).

Composition is skewed to polar residues over residues 1–14 and 27–36; these read MPFSNETEMSQCSN and KNCSTSSTDS. Disordered stretches follow at residues 1-78 and 239-278; these read MPFS…RISV and DKWKPGEGPAGGQDNPAFNGGPSTNGSAPGSKHEDPAQTP. Topologically, residues 1–291 are cytoplasmic; the sequence is MPFSNETEMS…PFLPNTVGRK (291 aa). Basic and acidic residues-rich tracts occupy residues 48–58 and 66–78; these read RPEKETKDRGT and KSEEKTESKRISV. The chain crosses the membrane as a helical; Signal-anchor for type II membrane protein span at residues 292–312; that stretch reads AVTVTVVFVTLTFLLGIVLAT. The Extracellular segment spans residues 313 to 520; the sequence is TTNLFGKTLN…ASFANWTHWS (208 aa). A glycan (N-linked (GlcNAc...) asparagine) is linked at N389. C390 and C396 are oxidised to a cystine. Positions 412–490 constitute an N-acetylmuramoyl-L-alanine amidase domain; sequence QKCDIAYNFL…KLGKIAPSYR (79 aa). The N-linked (GlcNAc...) asparagine glycan is linked to N515.

Belongs to the N-acetylmuramoyl-L-alanine amidase 2 family. In terms of processing, proteolytically cleaved, probably by a metaloprotease such as Mmp2; proteolytic cleavage leads to activation of the imd/Relish signaling pathway. As to expression, expressed in the fat body and hemocytes.

It localises to the membrane. With respect to regulation, activated by proteolytic cleavage in response to Gram-negative bacterial infection; cleavage may be mediated by endogenous proteases, such as the metalloprotease Mmp2 or elastase, or by bacterially expressed proteases such as the surface serine protease OmpT. Its function is as follows. Major activator of the imd/Relish pathway and is likely to encode a pattern recognition molecule for the humoral immune response. Required for Relish processing and nuclear translocation following proteolytic cleavage. Involved in the response to lipopolysaccharide (LPS) and peptidoglycan of Gram-negative bacteria. The different isoforms probably display different recognition capabilities to various microbial patterns. Mediates the response to LPS and Gram-negative bacteria. Functionally, mediates the response to LPS, peptidoglycan and Gram-negative bacteria. In Drosophila melanogaster (Fruit fly), this protein is Peptidoglycan-recognition protein LC (PGRP-LC).